The chain runs to 224 residues: Putative O-methyltransferase MLBr01075 (224 aa).

Residues V51, E73, 75-76, S81, D99, and I100 contribute to the S-adenosyl-L-methionine site; that span reads GT. D147 is a substrate binding site. D149 contributes to the S-adenosyl-L-methionine binding site.

The protein belongs to the class I-like SAM-binding methyltransferase superfamily. Cation-dependent O-methyltransferase family.

This chain is Putative O-methyltransferase MLBr01075, found in Mycobacterium leprae (strain Br4923).